Reading from the N-terminus, the 147-residue chain is Ubiquitin-conjugating enzyme E2 D3 (147 aa).

Positions 1 to 147 constitute a UBC core domain; the sequence is MALKRINKEL…SREWTQKYAM (147 aa). Cys21 and Cys107 are disulfide-bonded. Residue Cys85 is the Glycyl thioester intermediate of the active site.

Belongs to the ubiquitin-conjugating enzyme family. In terms of assembly, interacts with SCF (SKP1-CUL1-F-box protein) E3 ubiquitin ligase complex; when Cullin is neddylated, the interaction between the E2 and the SCF complex is strengthened. Interacts with DAPK3. Interacts with BRCA1; the DNA damage checkpoint promotes the association with BRCA1 after ionizing radiation. Interacts non-covalently with ubiquitin. Interacts with E3 ubiquitin-protein ligase CBLC. Interacts with UBTD1. Interacts with RIGI and RNF135; involved in RIGI ubiquitination and activation. Post-translationally, phosphorylated by AURKB.

It localises to the cell membrane. The protein resides in the endosome membrane. The catalysed reaction is S-ubiquitinyl-[E1 ubiquitin-activating enzyme]-L-cysteine + [E2 ubiquitin-conjugating enzyme]-L-cysteine = [E1 ubiquitin-activating enzyme]-L-cysteine + S-ubiquitinyl-[E2 ubiquitin-conjugating enzyme]-L-cysteine.. It carries out the reaction S-ubiquitinyl-[E1 ubiquitin-activating enzyme]-L-cysteine + [acceptor protein]-L-lysine = [E1 ubiquitin-activating enzyme]-L-cysteine + N(6)-monoubiquitinyl-[acceptor protein]-L-lysine.. The protein operates within protein modification; protein ubiquitination. Its function is as follows. Accepts ubiquitin from the E1 complex and catalyzes its covalent attachment to other proteins. In vitro catalyzes 'Lys-11'-, as well as 'Lys-48'-linked polyubiquitination. Cooperates with the E2 CDC34 and the SCF(FBXW11) E3 ligase complex for the polyubiquitination of NFKBIA leading to its subsequent proteasomal degradation. Acts as an initiator E2, priming the phosphorylated NFKBIA target at positions 'Lys-21' and/or 'Lys-22' with a monoubiquitin. Ubiquitin chain elongation is then performed by CDC34, building ubiquitin chains from the UBE2D3-primed NFKBIA-linked ubiquitin. Also acts as an initiator E2, in conjunction with RNF8, for the priming of PCNA. Monoubiquitination of PCNA, and its subsequent polyubiquitination, are essential events in the operation of the DNA damage tolerance (DDT) pathway that is activated after DNA damage caused by UV or chemical agents during S-phase. Associates with the BRCA1/BARD1 E3 ligase complex to perform ubiquitination at DNA damage sites following ionizing radiation leading to DNA repair. Targets DAPK3 for ubiquitination which influences promyelocytic leukemia protein nuclear body (PML-NB) formation in the nucleus. In conjunction with the MDM2 and TOPORS E3 ligases, functions ubiquitination of p53/TP53. In conjunction with the CBL E3 ligase, targets EGFR for polyubiquitination at the plasma membrane as well as during its internalization and transport on endosomes. In conjunction with the STUB1 E3 quality control E3 ligase, ubiquitinates unfolded proteins to catalyze their immediate destruction. Together with RNF135, catalyzes the viral RNA-dependent 'Lys-63'-linked polyubiquitination of RIGI to activate the downstream signaling pathway that leads to interferon beta production. Together with ZNF598, catalyzes ubiquitination of 40S ribosomal proteins in response to ribosome collisions. In cooperation with the GATOR2 complex, catalyzes 'Lys-6'-linked ubiquitination of NPRL2. In Bos taurus (Bovine), this protein is Ubiquitin-conjugating enzyme E2 D3 (UBE2D3).